The chain runs to 173 residues: dCTP deaminase, dUMP-forming (173 aa).

Residues 93–98 (RSSTGR), Asp-111, 119–121 (TLE), Gln-138, and Tyr-151 contribute to the dCTP site. The active-site Proton donor/acceptor is Glu-121.

This sequence belongs to the dCTP deaminase family. Homotrimer.

It carries out the reaction dCTP + 2 H2O = dUMP + NH4(+) + diphosphate. It participates in pyrimidine metabolism; dUMP biosynthesis; dUMP from dCTP: step 1/1. In terms of biological role, bifunctional enzyme that catalyzes both the deamination of dCTP to dUTP and the hydrolysis of dUTP to dUMP without releasing the toxic dUTP intermediate. The chain is dCTP deaminase, dUMP-forming from Clostridium botulinum (strain Alaska E43 / Type E3).